The chain runs to 284 residues: Tropomyosin alpha-1 chain (284 aa).

The segment at 1 to 38 is disordered; it reads MDAIKKKMQMLKLDKENALDRAEQAEADKKAAEERSKQ. The stretch at 1 to 284 forms a coiled coil; sequence MDAIKKKMQM…DHALNDMTSI (284 aa). The span at 12 to 38 shows a compositional bias: basic and acidic residues; that stretch reads KLDKENALDRAEQAEADKKAAEERSKQ.

It belongs to the tropomyosin family. Homodimer. Heterodimer of an alpha (TPM1, TPM3 or TPM4) and a beta (TPM2) chain. Interacts with HRG (via the HRR domain); the interaction contributes to the antiangiogenic properties of the histidine/proline-rich region (HRR) of HRG.

The protein resides in the cytoplasm. The protein localises to the cytoskeleton. Binds to actin filaments in muscle and non-muscle cells. Plays a central role, in association with the troponin complex, in the calcium dependent regulation of vertebrate striated muscle contraction. Smooth muscle contraction is regulated by interaction with caldesmon. In non-muscle cells is implicated in stabilizing cytoskeleton actin filaments. This Coturnix japonica (Japanese quail) protein is Tropomyosin alpha-1 chain (TPM1).